Reading from the N-terminus, the 502-residue chain is ATP synthase subunit beta (502 aa).

156–163 (GGAGVGKT) lines the ATP pocket.

The protein belongs to the ATPase alpha/beta chains family. F-type ATPases have 2 components, CF(1) - the catalytic core - and CF(0) - the membrane proton channel. CF(1) has five subunits: alpha(3), beta(3), gamma(1), delta(1), epsilon(1). CF(0) has three main subunits: a(1), b(2) and c(9-12). The alpha and beta chains form an alternating ring which encloses part of the gamma chain. CF(1) is attached to CF(0) by a central stalk formed by the gamma and epsilon chains, while a peripheral stalk is formed by the delta and b chains.

The protein resides in the cell membrane. It catalyses the reaction ATP + H2O + 4 H(+)(in) = ADP + phosphate + 5 H(+)(out). Produces ATP from ADP in the presence of a proton gradient across the membrane. The catalytic sites are hosted primarily by the beta subunits. The chain is ATP synthase subunit beta from Cellulophaga lytica (Cytophaga lytica).